The chain runs to 230 residues: Somatolactin (230 aa).

A signal peptide spans 1 to 23; it reads MNMMTVKQGVWAALLWPYLLAAS. Cystine bridges form between Cys-28–Cys-38, Cys-88–Cys-204, and Cys-221–Cys-229. 2 N-linked (GlcNAc...) asparagine glycosylation sites follow: Asn-137 and Asn-144.

The protein belongs to the somatotropin/prolactin family.

It localises to the secreted. The polypeptide is Somatolactin (Hippoglossus hippoglossus (Atlantic halibut)).